The chain runs to 904 residues: Alanine--tRNA ligase (904 aa).

Positions 600, 604, 704, and 708 each coordinate Zn(2+).

The protein belongs to the class-II aminoacyl-tRNA synthetase family. Zn(2+) serves as cofactor.

Its subcellular location is the cytoplasm. It carries out the reaction tRNA(Ala) + L-alanine + ATP = L-alanyl-tRNA(Ala) + AMP + diphosphate. In terms of biological role, catalyzes the attachment of alanine to tRNA(Ala) in a two-step reaction: alanine is first activated by ATP to form Ala-AMP and then transferred to the acceptor end of tRNA(Ala). Also edits incorrectly charged Ser-tRNA(Ala) and Gly-tRNA(Ala) via its editing domain. This chain is Alanine--tRNA ligase, found in Metallosphaera sedula (strain ATCC 51363 / DSM 5348 / JCM 9185 / NBRC 15509 / TH2).